A 369-amino-acid polypeptide reads, in one-letter code: Ribonuclease D (369 aa).

Residues M1–V166 form the 3'-5' exonuclease domain. In terms of domain architecture, HRDC spans R206–A285.

The protein belongs to the RNase D family. The cofactor is a divalent metal cation.

It is found in the cytoplasm. The catalysed reaction is Exonucleolytic cleavage that removes extra residues from the 3'-terminus of tRNA to produce 5'-mononucleotides.. Functionally, exonuclease involved in the 3' processing of various precursor tRNAs. Initiates hydrolysis at the 3'-terminus of an RNA molecule and releases 5'-mononucleotides. This Cronobacter turicensis (strain DSM 18703 / CCUG 55852 / LMG 23827 / z3032) protein is Ribonuclease D.